Here is a 184-residue protein sequence, read N- to C-terminus: MRVMGVDPGLTRCGLSLIESGQGRQLTALDVDVVRTPSDAPLSSRLLAINEAVEHWLETHRPDVVAIERVFSQQNVKTVMGTAQAGGVVALAAAKRGVEVHFHTPSEVKAAVTGNGTADKAQVTAMVTRILALQTKPTPADAADALALAICHCWRAPMIAQMAKAHALAEQQRRSYTAKLKAAR.

Catalysis depends on residues Asp-7, Glu-68, and Asp-141. The Mg(2+) site is built by Asp-7, Glu-68, and Asp-141.

It belongs to the RuvC family. In terms of assembly, homodimer which binds Holliday junction (HJ) DNA. The HJ becomes 2-fold symmetrical on binding to RuvC with unstacked arms; it has a different conformation from HJ DNA in complex with RuvA. In the full resolvosome a probable DNA-RuvA(4)-RuvB(12)-RuvC(2) complex forms which resolves the HJ. It depends on Mg(2+) as a cofactor.

Its subcellular location is the cytoplasm. The catalysed reaction is Endonucleolytic cleavage at a junction such as a reciprocal single-stranded crossover between two homologous DNA duplexes (Holliday junction).. Functionally, the RuvA-RuvB-RuvC complex processes Holliday junction (HJ) DNA during genetic recombination and DNA repair. Endonuclease that resolves HJ intermediates. Cleaves cruciform DNA by making single-stranded nicks across the HJ at symmetrical positions within the homologous arms, yielding a 5'-phosphate and a 3'-hydroxyl group; requires a central core of homology in the junction. The consensus cleavage sequence is 5'-(A/T)TT(C/G)-3'. Cleavage occurs on the 3'-side of the TT dinucleotide at the point of strand exchange. HJ branch migration catalyzed by RuvA-RuvB allows RuvC to scan DNA until it finds its consensus sequence, where it cleaves and resolves the cruciform DNA. The sequence is that of Crossover junction endodeoxyribonuclease RuvC from Mycobacterium ulcerans (strain Agy99).